The chain runs to 698 residues: Polyphosphate kinase 1 (698 aa).

Asparagine 46 is an ATP binding site. 2 residues coordinate Mg(2+): arginine 377 and arginine 407. The active-site Phosphohistidine intermediate is histidine 437. ATP-binding residues include tyrosine 470, arginine 566, and histidine 594.

It belongs to the polyphosphate kinase 1 (PPK1) family. The cofactor is Mg(2+). Post-translationally, an intermediate of this reaction is the autophosphorylated ppk in which a phosphate is covalently linked to a histidine residue through a N-P bond.

It catalyses the reaction [phosphate](n) + ATP = [phosphate](n+1) + ADP. Functionally, catalyzes the reversible transfer of the terminal phosphate of ATP to form a long-chain polyphosphate (polyP). This chain is Polyphosphate kinase 1, found in Chlorobaculum tepidum (strain ATCC 49652 / DSM 12025 / NBRC 103806 / TLS) (Chlorobium tepidum).